Reading from the N-terminus, the 275-residue chain is Homeobox-leucine zipper protein ATHB-17 (275 aa).

Positions 95–143 are disordered; it reads SSPLSDEGSGGGRDQLRLDMNRLPSSEDGDDEEFSHDDGSAPPRKKLRL. A DNA-binding region (homeobox) is located at residues 136 to 195; sequence PPRKKLRLTREQSRLLEDSFRQNHTLNPKQKEVLAKHLMLRPRQIEVWFQNRRARSKLKQ. Residues 203 to 224 form a leucine-zipper region; sequence LKRWFGSLTEENHRLHREVEEL. A disordered region spans residues 252-275; that stretch reads AASPSRAVVPVPAKKTFPPQERDR.

It belongs to the HD-ZIP homeobox family. Class II subfamily.

The protein localises to the nucleus. In terms of biological role, probable transcription factor. The polypeptide is Homeobox-leucine zipper protein ATHB-17 (ATHB-17) (Arabidopsis thaliana (Mouse-ear cress)).